A 469-amino-acid polypeptide reads, in one-letter code: Squamosa promoter-binding-like protein 3 (469 aa).

The segment at 96–118 (SAEEHDKNMDKGKSKVDDTGTSR) is disordered. Positions 97–115 (AEEHDKNMDKGKSKVDDTG) are enriched in basic and acidic residues. The SBP-type zinc finger occupies 179–256 (NPHCQVEGCN…HDHNARRRKP (78 aa)). Positions 182, 187, 204, 207, 223, 226, 230, and 242 each coordinate Zn(2+). A Bipartite nuclear localization signal motif is present at residues 239–255 (KRSCRRRLHDHNARRRK). The tract at residues 446 to 469 (NDDDEDHLQLPKPSYDNSHYDQMN) is disordered. Over residues 460 to 469 (YDNSHYDQMN) the composition is skewed to polar residues.

Ubiquitous.

The protein resides in the nucleus. In terms of biological role, trans-acting factor that binds specifically to the consensus nucleotide sequence 5'-TNCGTACAA-3'. May be involved in panicle development. This Oryza sativa subsp. indica (Rice) protein is Squamosa promoter-binding-like protein 3 (SPL3).